The primary structure comprises 358 residues: 3-dehydroquinate synthase (358 aa).

NAD(+) contacts are provided by residues 69 to 74 (DGEAHK), 103 to 107 (GVIGD), 127 to 128 (TT), Lys140, Lys149, and 167 to 170 (CLRT). Positions 182, 245, and 262 each coordinate Zn(2+).

It belongs to the sugar phosphate cyclases superfamily. Dehydroquinate synthase family. It depends on Co(2+) as a cofactor. Requires Zn(2+) as cofactor. The cofactor is NAD(+).

The protein resides in the cytoplasm. It carries out the reaction 7-phospho-2-dehydro-3-deoxy-D-arabino-heptonate = 3-dehydroquinate + phosphate. Its pathway is metabolic intermediate biosynthesis; chorismate biosynthesis; chorismate from D-erythrose 4-phosphate and phosphoenolpyruvate: step 2/7. Catalyzes the conversion of 3-deoxy-D-arabino-heptulosonate 7-phosphate (DAHP) to dehydroquinate (DHQ). The polypeptide is 3-dehydroquinate synthase (Tolumonas auensis (strain DSM 9187 / NBRC 110442 / TA 4)).